The primary structure comprises 366 residues: MIIEIVTILNFKNIEEGSLSFSPKINYLLGDNGMGKTNLLDALYYLAFTKNHTNLTDSQLINYNKDFAVLHAFYKDKDNIEEIYCGIKLKQRKIFKRNKKEYKKLSEHIGLIPTVMVSPNDTNMIQFGSNERRKFADMLISQYDKEYLRTLIYYNQALQQRNFLLRNALPSLSGEEFEIWEEQMGTTGEIIYQKRKNFTTDFLPLFKEYYYTISDKNETIDLEYVSHLDDHSLFELLYEKRERDKILGFTSTGIHKDDFNFLLNNFLIRKIGSQGQNKTYLIALKLAQFSFLVQKGLSIPILLLDDLFDKLDAKRVEKIIRLLAQKTFGQIFITDTNRKHLDNILTKMQHAYKLFYVSNGTIREIL.

ATP is bound at residue 30 to 37 (GDNGMGKT).

Belongs to the RecF family.

It is found in the cytoplasm. In terms of biological role, the RecF protein is involved in DNA metabolism; it is required for DNA replication and normal SOS inducibility. RecF binds preferentially to single-stranded, linear DNA. It also seems to bind ATP. The protein is DNA replication and repair protein RecF of Azobacteroides pseudotrichonymphae genomovar. CFP2.